The following is a 573-amino-acid chain: Urease subunit alpha 2 (573 aa).

The Urease domain maps to 135 to 573; sequence GGMDTHVHYI…ISLNQLYFFS (439 aa). Ni(2+) contacts are provided by His140, His142, and Lys223. N6-carboxylysine is present on Lys223. His225 serves as a coordination point for substrate. Ni(2+) contacts are provided by His252 and His278. The active-site Proton donor is His326. Asp366 contributes to the Ni(2+) binding site.

The protein belongs to the metallo-dependent hydrolases superfamily. Urease alpha subunit family. Heterotrimer of UreA (gamma), UreB (beta) and UreC (alpha) subunits. Three heterotrimers associate to form the active enzyme. It depends on Ni cation as a cofactor. In terms of processing, carboxylation allows a single lysine to coordinate two nickel ions.

It is found in the cytoplasm. The enzyme catalyses urea + 2 H2O + H(+) = hydrogencarbonate + 2 NH4(+). The protein operates within nitrogen metabolism; urea degradation; CO(2) and NH(3) from urea (urease route): step 1/1. This Brucella melitensis biotype 1 (strain ATCC 23456 / CCUG 17765 / NCTC 10094 / 16M) protein is Urease subunit alpha 2.